A 382-amino-acid chain; its full sequence is UDP-4-amino-4-deoxy-L-arabinose--oxoglutarate aminotransferase (382 aa).

Lysine 183 carries the post-translational modification N6-(pyridoxal phosphate)lysine.

It belongs to the DegT/DnrJ/EryC1 family. ArnB subfamily. Homodimer. Pyridoxal 5'-phosphate serves as cofactor.

The enzyme catalyses UDP-4-amino-4-deoxy-beta-L-arabinose + 2-oxoglutarate = UDP-beta-L-threo-pentopyranos-4-ulose + L-glutamate. It participates in nucleotide-sugar biosynthesis; UDP-4-deoxy-4-formamido-beta-L-arabinose biosynthesis; UDP-4-deoxy-4-formamido-beta-L-arabinose from UDP-alpha-D-glucuronate: step 2/3. It functions in the pathway bacterial outer membrane biogenesis; lipopolysaccharide biosynthesis. In terms of biological role, catalyzes the conversion of UDP-4-keto-arabinose (UDP-Ara4O) to UDP-4-amino-4-deoxy-L-arabinose (UDP-L-Ara4N). The modified arabinose is attached to lipid A and is required for resistance to polymyxin and cationic antimicrobial peptides. The protein is UDP-4-amino-4-deoxy-L-arabinose--oxoglutarate aminotransferase of Pseudomonas fluorescens (strain Pf0-1).